The following is a 47-amino-acid chain: Large ribosomal subunit protein bL34 (47 aa).

It belongs to the bacterial ribosomal protein bL34 family.

This chain is Large ribosomal subunit protein bL34, found in Mycobacterium ulcerans (strain Agy99).